Reading from the N-terminus, the 202-residue chain is N-(5'-phosphoribosyl)anthranilate isomerase (202 aa).

This sequence belongs to the TrpF family.

It carries out the reaction N-(5-phospho-beta-D-ribosyl)anthranilate = 1-(2-carboxyphenylamino)-1-deoxy-D-ribulose 5-phosphate. Its pathway is amino-acid biosynthesis; L-tryptophan biosynthesis; L-tryptophan from chorismate: step 3/5. The chain is N-(5'-phosphoribosyl)anthranilate isomerase from Listeria monocytogenes serotype 4b (strain CLIP80459).